Reading from the N-terminus, the 369-residue chain is DNA replication and repair protein RecF (369 aa).

30–37 (GDNGSGKT) is a binding site for ATP.

Belongs to the RecF family.

Its subcellular location is the cytoplasm. In terms of biological role, the RecF protein is involved in DNA metabolism; it is required for DNA replication and normal SOS inducibility. RecF binds preferentially to single-stranded, linear DNA. It also seems to bind ATP. This chain is DNA replication and repair protein RecF, found in Pseudomonas aeruginosa (strain UCBPP-PA14).